Reading from the N-terminus, the 414-residue chain is Lysosome-associated membrane glycoprotein 1 (414 aa).

Residues 1-18 (MGGAARAVLLGFLQASSS) form the signal peptide. Positions 19–181 (FDVRDSTGKV…SANKTECRED (163 aa)) are first lumenal domain. Residues 19-379 (FDVRDSTGKV…EECQLDENNM (361 aa)) are Lumenal-facing. A disulfide bridge links C29 with C67. N33, N58, N71, N90, N108, N117, N154, N159, N168, and N174 each carry an N-linked (GlcNAc...) asparagine glycan. Cysteines 142 and 178 form a disulfide. The hinge stretch occupies residues 182–224 (MVSTTTVAPTTPKHATSQVPTTSPAPTAAPSSPAVGKYNVTGA). The interval 186–213 (TTVAPTTPKHATSQVPTTSPAPTAAPSS) is disordered. The span at 196–213 (ATSQVPTTSPAPTAAPSS) shows a compositional bias: low complexity. N220, N225, N238, N259, N289, N301, and N319 each carry an N-linked (GlcNAc...) asparagine glycan. Residues 225-379 (NGTCVLASMG…EECQLDENNM (155 aa)) are second lumenal domain. A disulfide bridge connects residues C228 and C266. A disulfide bond links C335 and C372. Residues 380–403 (LIPIIVGAALAGLVLIVLIAYLIG) traverse the membrane as a helical segment. At 404–414 (RKRSHAGYQTI) the chain is on the cytoplasmic side.

This sequence belongs to the LAMP family.

It localises to the lysosome membrane. The protein resides in the endosome membrane. The protein localises to the late endosome membrane. Its subcellular location is the cell membrane. It is found in the cytolytic granule membrane. Lysosomal membrane glycoprotein which plays an important role in lysosome biogenesis, lysosomal pH regulation, autophagy and cholesterol homeostasis. Its function is as follows. (Microbial infection) Plays an essential role in efficient replication and spread of Marek's disease virus, by facilitating viral cell-to-cell spread. The protein is Lysosome-associated membrane glycoprotein 1 (LAMP1) of Gallus gallus (Chicken).